We begin with the raw amino-acid sequence, 593 residues long: MPNANALSKKPSSNIIGIDLGTTNSCVSVVKNGEPVIIENQEGERTTPSVVSILKDEVLVGSQSKSKILTHPKNTVFASKRLIGRKLEDPEVKKYVKGLPFDTTSHCNGDVWIKVDGKKYSPAQIGAFILSKLKRSAESFLNHSVVKSVITVPAYFNDSQRQATKDAGRIAGLDVVRVINEPTAAALAYGLDKSARGNIAVYDLGGGTFDISILELSDGVFHVKATNGDTFLGGEDLDNEVVSFIVKDFMEKEGIDLGRDVNALARIKECAEKVKKDLSSSVVSRIDIPYICNVGGEAKHLSREITRSEFEKIVEKIVNRTIEPCKKALADAGLDSADIKHVILVGGMTRMPYVRKVVKEIFGIEPSTEINPDEAVAKGAALQGGVLAGEVDNVLLLDVAPLSLGIELLGGVFSKIMRRNTTIPFKETQIFSTSEDNQTDVDIKVYQGERAMAADNKYLGQIKLKNIPPLPRGVPKIEVTFESDANGMYRVTAQDSVTRTPQSLEIIPSSGLTEKEIDRMVREGEELKNLDEMKRRKAEVTISVGELLRRGYNELRKAPEDSLSKLRKVARGEDFDLEETEQILLDVKKAISK.

Belongs to the heat shock protein 70 family.

It localises to the nucleus. Its function is as follows. May act as a chaperone. The sequence is that of Mitochondrial-type heat shock protein 70 (HSP70) from Encephalitozoon hellem (Microsporidian parasite).